The following is a 375-amino-acid chain: Alanine racemase (375 aa).

Residue lysine 35 is the Proton acceptor; specific for D-alanine of the active site. Residue lysine 35 is modified to N6-(pyridoxal phosphate)lysine. Arginine 133 contributes to the substrate binding site. Tyrosine 261 acts as the Proton acceptor; specific for L-alanine in catalysis. Methionine 309 contributes to the substrate binding site.

It belongs to the alanine racemase family. Pyridoxal 5'-phosphate is required as a cofactor.

The enzyme catalyses L-alanine = D-alanine. Its pathway is amino-acid biosynthesis; D-alanine biosynthesis; D-alanine from L-alanine: step 1/1. Its function is as follows. Catalyzes the interconversion of L-alanine and D-alanine. May also act on other amino acids. This chain is Alanine racemase (alr), found in Syntrophobacter fumaroxidans (strain DSM 10017 / MPOB).